The chain runs to 61 residues: Putative neurotoxin-A (61 aa).

The first 19 residues, 1–19, serve as a signal peptide directing secretion; sequence MKTVCGVFMVLLALTVLLA. Intrachain disulfides connect cysteine 31-cysteine 50, cysteine 36-cysteine 55, and cysteine 40-cysteine 57.

The protein belongs to the short scorpion toxin superfamily. As to expression, expressed by the venom gland.

It is found in the secreted. The protein is Putative neurotoxin-A of Lychas mucronatus (Chinese swimming scorpion).